The chain runs to 43 residues: Holotricin-1 (43 aa).

3 disulfide bridges follow: cysteine 3–cysteine 34, cysteine 20–cysteine 39, and cysteine 24–cysteine 41.

The protein belongs to the invertebrate defensin family. Type 1 subfamily. In terms of tissue distribution, hemolymph.

The protein resides in the secreted. Shows potent antibacterial activity against Gram-positive bacteria. The chain is Holotricin-1 from Holotrichia diomphalia (Korean black chafer).